The following is a 282-amino-acid chain: MGTRAQQIPLLEGETDNYDGVTVTMVEPMDSEVFTESLRASLSHWREEGKKGIWIKLPLGLANLVEAAVSEGFRYHHAEPEYLMLVSWISETPDTIPANASHVVGAGALVINKNTKEVLVVQERSGFFKDKNVWKLPTGVINEGEDIWTGVAREVEEETGIIADFVEVLAFRQSHKAILKKKTDMFFLCVLSPRSYDITEQKSEILQAKWMPIQEYVDQPWNKKNEMFKFMANICQKKCEEEYLGFAIVPTTTSSGKESFIYCNADHAKRLKVSRDQASASL.

In terms of domain architecture, Nudix hydrolase spans 101 to 233 (SHVVGAGALV…KNEMFKFMAN (133 aa)). Residues 139–160 (GVINEGEDIWTGVAREVEEETG) carry the Nudix box motif. 2 residues coordinate Mg(2+): Glu154 and Glu158.

It belongs to the Nudix hydrolase family. As to quaternary structure, homodimer. Interacts with RACK1A, GG1 and GG2. Mg(2+) is required as a cofactor. As to expression, expressed in stems, leaves, roots, flowers and siliques.

It is found in the nucleus. It localises to the cytoplasm. Its subcellular location is the cell membrane. The catalysed reaction is ADP-D-ribose + H2O = D-ribose 5-phosphate + AMP + 2 H(+). It carries out the reaction NAD(+) + H2O = beta-nicotinamide D-ribonucleotide + AMP + 2 H(+). The enzyme catalyses NADH + H2O = reduced beta-nicotinamide D-ribonucleotide + AMP + 2 H(+). Its activity is regulated as follows. Not inhibited by fluoride. Functionally, mediates the hydrolysis of some nucleoside diphosphate derivatives. Can use both NADH and ADP-ribose as substrates, but not 8-oxo-dGTP, cyclic ADP-ribose, GDP-mannose, UDP-glucose, ATP, or GTP. Exerts negative control of EDS1 signaling. The chain is Nudix hydrolase 7 (NUDT7) from Arabidopsis thaliana (Mouse-ear cress).